The following is a 5571-amino-acid chain: Polyketide synthase GfsB (5571 aa).

The tract at residues 1-27 (MSVPPPGATPSRTSRTKGLKDRPRMEN) is disordered. Residues 18–27 (GLKDRPRMEN) are compositionally biased toward basic and acidic residues. Positions 57 to 483 (QEPVAIIGMS…GTNAHVIIEQ (427 aa)) constitute a Ketosynthase family 3 (KS3) 1 domain. Module stretches follow at residues 57 to 2148 (QEPV…RDTL), 2167 to 3728 (DEPL…GSQV), and 3746 to 5485 (DEPV…HTHL). Active-site for beta-ketoacyl synthase 1 activity residues include cysteine 230, histidine 365, and histidine 405. Residues 485 to 518 (PAIEGTGLGDDAPPTAEHPEERTPADGGPAPQPV) form a disordered region. The region spanning 611–926 (FVFPGQGSQW…LRSLAEAYAH (316 aa)) is the Malonyl-CoA:ACP transacylase (MAT) 1 domain. The N-terminal hotdog fold 1 stretch occupies residues 976-1109 (HPLLAAATSL…GYLAVGAHEP (134 aa)). The 289-residue stretch at 976–1264 (HPLLAAATSL…LRPLATNQAP (289 aa)) folds into the PKS/mFAS DH 1 domain. The Proton acceptor; for dehydratase activity 1 role is filled by histidine 1008. Residues 1122-1264 (ATPLDVTDLY…LRPLATNQAP (143 aa)) form a C-terminal hotdog fold 1 region. Aspartate 1183 functions as the Proton donor; for dehydratase activity 1 in the catalytic mechanism. Residues 1478 to 1777 (GTLDHLTLIP…QARHIGKIVL (300 aa)) form the Enoyl reductase (ER) domain. A Ketoreductase (KR) 1 domain is found at 1787–1966 (GTVLVTGATG…TSLAWGLWEE (180 aa)). The Carrier 1 domain maps to 2073 to 2148 (RIVNDLVRDH…ELAAHLRDTL (76 aa)). The residue at position 2108 (serine 2108) is an O-(pantetheine 4'-phosphoryl)serine. Residues 2167–2593 (DEPLAVVAMS…GTNAHVILEQ (427 aa)) form the Ketosynthase family 3 (KS3) 2 domain. Catalysis depends on for beta-ketoacyl synthase 2 activity residues cysteine 2340, histidine 2475, and histidine 2515. In terms of domain architecture, Malonyl-CoA:ACP transacylase (MAT) 2 spans 2710-3016 (VFSGQGSQRP…AAVALQRGNR (307 aa)). In terms of domain architecture, Ketoreductase (KR) 2 spans 3373-3551 (GTVLVTGGTG…VSVAWGPWAE (179 aa)). The Carrier 2 domain maps to 3653 to 3728 (TALLDLVRGQ…ALAEYVGSQV (76 aa)). Position 3688 is an O-(pantetheine 4'-phosphoryl)serine (serine 3688). The region spanning 3746 to 4172 (DEPVAIIGMS…GTNAHVILEQ (427 aa)) is the Ketosynthase family 3 (KS3) 3 domain. Residues cysteine 3919, histidine 4054, and histidine 4094 each act as for beta-ketoacyl synthase 3 activity in the active site. Residues 4279 to 4601 (FLFSGQGSQR…ATAHVNGVQP (323 aa)) form the Malonyl-CoA:ACP transacylase (MAT) 3 domain. The interval 4649–4774 (HPLLAGVVDL…GALTVAEAVD (126 aa)) is N-terminal hotdog fold 2. Residues 4649 to 4931 (HPLLAGVVDL…TRPIAAGQLA (283 aa)) form the PKS/mFAS DH 2 domain. The Proton acceptor; for dehydratase activity 2 role is filled by histidine 4681. Residues 4787-4931 (AIEVELDDPY…TRPIAAGQLA (145 aa)) form a C-terminal hotdog fold 2 region. Aspartate 4848 functions as the Proton donor; for dehydratase activity 2 in the catalytic mechanism. Residues 5134–5306 (LLVTGASGVL…TSLSWGLWAE (173 aa)) enclose the Ketoreductase (KR) 3 domain. Positions 5410 to 5485 (RMVLDLVRDR…ALARYLHTHL (76 aa)) constitute a Carrier 3 domain. An O-(pantetheine 4'-phosphoryl)serine modification is found at serine 5445.

The cofactor is pantetheine 4'-phosphate.

Its pathway is antibiotic biosynthesis. Second protein in the synthesis of the 16-membered macrolide antibiotics FD-891 and FD-892. Composed of 3 modules. Modifies the product of GfsA by multiple rounds of addition of malonyl-CoA or methylmalonyl-CoA and other modifications to help generate the final products. This chain is Polyketide synthase GfsB, found in Streptomyces halstedii.